The chain runs to 25 residues: Neuromedin-U-25 (25 aa).

Gln18 is subject to Pyrrolidone carboxylic acid. Asn25 is subject to Asparagine amide.

It belongs to the NmU family.

It localises to the secreted. Functionally, stimulates uterine smooth muscle contraction and causes selective vasoconstriction. The chain is Neuromedin-U-25 (NMU) from Canis lupus familiaris (Dog).